A 40-amino-acid polypeptide reads, in one-letter code: Photosystem II reaction center protein J (40 aa).

Residues I8–F28 traverse the membrane as a helical segment.

This sequence belongs to the PsbJ family. PSII is composed of 1 copy each of membrane proteins PsbA, PsbB, PsbC, PsbD, PsbE, PsbF, PsbH, PsbI, PsbJ, PsbK, PsbL, PsbM, PsbT, PsbX, PsbY, PsbZ, Psb30/Ycf12, at least 3 peripheral proteins of the oxygen-evolving complex and a large number of cofactors. It forms dimeric complexes.

The protein resides in the plastid. It is found in the chloroplast thylakoid membrane. Its function is as follows. One of the components of the core complex of photosystem II (PSII). PSII is a light-driven water:plastoquinone oxidoreductase that uses light energy to abstract electrons from H(2)O, generating O(2) and a proton gradient subsequently used for ATP formation. It consists of a core antenna complex that captures photons, and an electron transfer chain that converts photonic excitation into a charge separation. The protein is Photosystem II reaction center protein J of Acorus calamus (Sweet flag).